A 132-amino-acid chain; its full sequence is Transcription antitermination protein NusB (132 aa).

It belongs to the NusB family.

Involved in transcription antitermination. Required for transcription of ribosomal RNA (rRNA) genes. Binds specifically to the boxA antiterminator sequence of the ribosomal RNA (rrn) operons. The protein is Transcription antitermination protein NusB of Sulfurimonas denitrificans (strain ATCC 33889 / DSM 1251) (Thiomicrospira denitrificans (strain ATCC 33889 / DSM 1251)).